The sequence spans 316 residues: Beta-ketoacyl-[acyl-carrier-protein] synthase III (316 aa).

Residues cysteine 112 and histidine 243 contribute to the active site. Residues 244-248 are ACP-binding; that stretch reads QANIR. Residue asparagine 273 is part of the active site.

The protein belongs to the thiolase-like superfamily. FabH family. In terms of assembly, homodimer.

It is found in the cytoplasm. It carries out the reaction malonyl-[ACP] + acetyl-CoA + H(+) = 3-oxobutanoyl-[ACP] + CO2 + CoA. The protein operates within lipid metabolism; fatty acid biosynthesis. Functionally, catalyzes the condensation reaction of fatty acid synthesis by the addition to an acyl acceptor of two carbons from malonyl-ACP. Catalyzes the first condensation reaction which initiates fatty acid synthesis and may therefore play a role in governing the total rate of fatty acid production. Possesses both acetoacetyl-ACP synthase and acetyl transacylase activities. Its substrate specificity determines the biosynthesis of branched-chain and/or straight-chain of fatty acids. This chain is Beta-ketoacyl-[acyl-carrier-protein] synthase III, found in Actinobacillus pleuropneumoniae serotype 5b (strain L20).